Consider the following 194-residue polypeptide: Amidophosphoribosyltransferase (194 aa).

The propeptide occupies 1 to 11 (MPHEPKGLNEE). Cysteine 12 serves as the catalytic Nucleophile. One can recognise a Glutamine amidotransferase type-2 domain in the interval 12-194 (CGVFGVWGNP…PHGFRPMVVG (183 aa)).

This sequence in the C-terminal section; belongs to the purine/pyrimidine phosphoribosyltransferase family.

It catalyses the reaction 5-phospho-beta-D-ribosylamine + L-glutamate + diphosphate = 5-phospho-alpha-D-ribose 1-diphosphate + L-glutamine + H2O. It functions in the pathway purine metabolism; IMP biosynthesis via de novo pathway; N(1)-(5-phospho-D-ribosyl)glycinamide from 5-phospho-alpha-D-ribose 1-diphosphate: step 1/2. Catalyzes the formation of phosphoribosylamine from phosphoribosylpyrophosphate (PRPP) and glutamine. The chain is Amidophosphoribosyltransferase from Lacticaseibacillus casei (Lactobacillus casei).